The following is a 576-amino-acid chain: Proline--tRNA ligase (576 aa).

This sequence belongs to the class-II aminoacyl-tRNA synthetase family. ProS type 1 subfamily. As to quaternary structure, homodimer.

It localises to the cytoplasm. The catalysed reaction is tRNA(Pro) + L-proline + ATP = L-prolyl-tRNA(Pro) + AMP + diphosphate. Functionally, catalyzes the attachment of proline to tRNA(Pro) in a two-step reaction: proline is first activated by ATP to form Pro-AMP and then transferred to the acceptor end of tRNA(Pro). As ProRS can inadvertently accommodate and process non-cognate amino acids such as alanine and cysteine, to avoid such errors it has two additional distinct editing activities against alanine. One activity is designated as 'pretransfer' editing and involves the tRNA(Pro)-independent hydrolysis of activated Ala-AMP. The other activity is designated 'posttransfer' editing and involves deacylation of mischarged Ala-tRNA(Pro). The misacylated Cys-tRNA(Pro) is not edited by ProRS. This is Proline--tRNA ligase from Psychrobacter sp. (strain PRwf-1).